We begin with the raw amino-acid sequence, 428 residues long: Glutamyl-tRNA reductase (428 aa).

Substrate-binding positions include 49-52, Ser109, 114-116, and Gln120; these read TCNR and EGQ. Cys50 functions as the Nucleophile in the catalytic mechanism. 189–194 contacts NADP(+); the sequence is GAGKMS.

This sequence belongs to the glutamyl-tRNA reductase family. Homodimer.

The catalysed reaction is (S)-4-amino-5-oxopentanoate + tRNA(Glu) + NADP(+) = L-glutamyl-tRNA(Glu) + NADPH + H(+). Its pathway is porphyrin-containing compound metabolism; protoporphyrin-IX biosynthesis; 5-aminolevulinate from L-glutamyl-tRNA(Glu): step 1/2. It functions in the pathway porphyrin-containing compound metabolism; chlorophyll biosynthesis. Catalyzes the NADPH-dependent reduction of glutamyl-tRNA(Glu) to glutamate 1-semialdehyde (GSA). The protein is Glutamyl-tRNA reductase of Trichormus variabilis (strain ATCC 29413 / PCC 7937) (Anabaena variabilis).